Consider the following 144-residue polypeptide: UPF0547 protein C16orf87 homolog (144 aa).

The disordered stretch occupies residues 33 to 112; that stretch reads HAKQSQRLPP…EEKEKQEKEV (80 aa). A compositionally biased stretch (polar residues) spans 35-45; that stretch reads KQSQRLPPTSE. Residues 50–62 are compositionally biased toward basic residues; the sequence is PKRRRTERIKRER. 2 stretches are compositionally biased toward basic and acidic residues: residues 63–74 and 99–112; these read IHTAVNRDLENR and KKHE…EKEV. The stretch at 94-122 forms a coiled coil; it reads KTATTKKHEEEKEKQEKEVDMYANLSDEK.

Belongs to the UPF0547 family.

The polypeptide is UPF0547 protein C16orf87 homolog (Xenopus laevis (African clawed frog)).